The chain runs to 281 residues: Bifunctional protein FolD (281 aa).

NADP(+)-binding positions include 165 to 167 (GRG), T192, and V233.

The protein belongs to the tetrahydrofolate dehydrogenase/cyclohydrolase family. As to quaternary structure, homodimer.

It catalyses the reaction (6R)-5,10-methylene-5,6,7,8-tetrahydrofolate + NADP(+) = (6R)-5,10-methenyltetrahydrofolate + NADPH. It carries out the reaction (6R)-5,10-methenyltetrahydrofolate + H2O = (6R)-10-formyltetrahydrofolate + H(+). It participates in one-carbon metabolism; tetrahydrofolate interconversion. In terms of biological role, catalyzes the oxidation of 5,10-methylenetetrahydrofolate to 5,10-methenyltetrahydrofolate and then the hydrolysis of 5,10-methenyltetrahydrofolate to 10-formyltetrahydrofolate. The polypeptide is Bifunctional protein FolD (Corynebacterium diphtheriae (strain ATCC 700971 / NCTC 13129 / Biotype gravis)).